Here is a 232-residue protein sequence, read N- to C-terminus: 5'-methylthioadenosine/S-adenosylhomocysteine nucleosidase (232 aa).

Glu-12 serves as the catalytic Proton acceptor. Substrate contacts are provided by residues Gly-78, Ile-152, and Met-173 to Glu-174. The active-site Proton donor is the Asp-197.

This sequence belongs to the PNP/UDP phosphorylase family. MtnN subfamily. As to quaternary structure, homodimer.

It carries out the reaction S-adenosyl-L-homocysteine + H2O = S-(5-deoxy-D-ribos-5-yl)-L-homocysteine + adenine. The enzyme catalyses S-methyl-5'-thioadenosine + H2O = 5-(methylsulfanyl)-D-ribose + adenine. It catalyses the reaction 5'-deoxyadenosine + H2O = 5-deoxy-D-ribose + adenine. Its pathway is amino-acid biosynthesis; L-methionine biosynthesis via salvage pathway; S-methyl-5-thio-alpha-D-ribose 1-phosphate from S-methyl-5'-thioadenosine (hydrolase route): step 1/2. Catalyzes the irreversible cleavage of the glycosidic bond in both 5'-methylthioadenosine (MTA) and S-adenosylhomocysteine (SAH/AdoHcy) to adenine and the corresponding thioribose, 5'-methylthioribose and S-ribosylhomocysteine, respectively. Also cleaves 5'-deoxyadenosine, a toxic by-product of radical S-adenosylmethionine (SAM) enzymes, into 5-deoxyribose and adenine. Thus, is required for in vivo function of the radical SAM enzymes biotin synthase and lipoic acid synthase, that are inhibited by 5'-deoxyadenosine accumulation. The sequence is that of 5'-methylthioadenosine/S-adenosylhomocysteine nucleosidase from Salmonella paratyphi A (strain ATCC 9150 / SARB42).